The sequence spans 67 residues: MERRTLLVVLLVCSCVVAAAAEASPSRWPSPGRPRPFPGRPNPIFRPRPCICVRQPCPCDTYGGNRW.

A signal peptide spans 1-25 (MERRTLLVVLLVCSCVVAAAAEASP). Positions 22 to 44 (EASPSRWPSPGRPRPFPGRPNPI) are disordered. The segment covering 31–44 (PGRPRPFPGRPNPI) has biased composition (pro residues). Intrachain disulfides connect C50-C59 and C52-C57.

In terms of assembly, interacts with chitin through the N-terminal region (26-48). This interaction may be important, since chitin is a component of the fungal cell wall, as well as of the crab exoskeleton (permitting a possible action of arasin in wound healing in case of lesions). In terms of processing, disulfide bonds are important for activity especially against Gram-negative bacteria, since the linearization of the peptide causes a strong decrease of activity on these bacteria. Mainly expressed in hemocytes. No or very low expression in heart, gills, inestines, and epidermis.

Its function is as follows. Antimicrobial peptide that has a large activity spectrum with activity against Gram-positive, Gram-negative bacteria, as well as against fungi. Shows activity at micromolar concentrations. Displays minimal inhibitory concentration (MIC) values lower than minimal bactericidal concentrations (MBC). May have a dual mode of action depending on the peptide concentrations. At MIC concentrations, the peptide penetrates into the cytoplasm of target cells (tested on the Gram-negative E.coli). The two inner membrane proteins YgdD and SbmA may be required for this uptake. At concentrations higher than MIC, arasin may act by disrupting membranes. Does not show hemolytic activity. The protein is Arasin 2 of Hyas araneus (Atlantic lyre crab).